The chain runs to 747 residues: uncharacterized protein (747 aa).

A helical transmembrane segment spans residues 7 to 27 (FFLKVISVIAPIVIIPTILAN).

It localises to the membrane. This is an uncharacterized protein from Ureaplasma parvum serovar 3 (strain ATCC 700970).